Here is a 247-residue protein sequence, read N- to C-terminus: Probable transcriptional regulatory protein Syncc9605_2132 (247 aa).

It belongs to the TACO1 family.

The protein localises to the cytoplasm. The polypeptide is Probable transcriptional regulatory protein Syncc9605_2132 (Synechococcus sp. (strain CC9605)).